A 78-amino-acid chain; its full sequence is Defensin-like protein 281 (78 aa).

A signal peptide spans M1 to G23. 3 disulfides stabilise this stretch: C37/C60, C46/C72, and C50/C74.

It belongs to the DEFL family.

The protein resides in the secreted. This Arabidopsis thaliana (Mouse-ear cress) protein is Defensin-like protein 281.